We begin with the raw amino-acid sequence, 368 residues long: Chorismate synthase (368 aa).

R46 serves as a coordination point for NADP(+). FMN contacts are provided by residues 124–126 (RAS), G284, 299–303 (KPTPS), and R326.

Belongs to the chorismate synthase family. It depends on FMNH2 as a cofactor.

It carries out the reaction 5-O-(1-carboxyvinyl)-3-phosphoshikimate = chorismate + phosphate. The protein operates within metabolic intermediate biosynthesis; chorismate biosynthesis; chorismate from D-erythrose 4-phosphate and phosphoenolpyruvate: step 7/7. Functionally, catalyzes the anti-1,4-elimination of the C-3 phosphate and the C-6 proR hydrogen from 5-enolpyruvylshikimate-3-phosphate (EPSP) to yield chorismate, which is the branch point compound that serves as the starting substrate for the three terminal pathways of aromatic amino acid biosynthesis. This reaction introduces a second double bond into the aromatic ring system. This is Chorismate synthase from Pyrobaculum arsenaticum (strain DSM 13514 / JCM 11321 / PZ6).